The following is a 178-amino-acid chain: Nucleoside-triphosphatase THEP1 (178 aa).

ATP contacts are provided by residues 7–14 (GEPGVGKT) and 102–109 (VIIIDEIG).

It belongs to the THEP1 NTPase family. As to quaternary structure, monomer.

It carries out the reaction a ribonucleoside 5'-triphosphate + H2O = a ribonucleoside 5'-diphosphate + phosphate + H(+). Functionally, has nucleotide phosphatase activity towards ATP, GTP, CTP, TTP and UTP. May hydrolyze nucleoside diphosphates with lower efficiency. Does not have kinase activity. This is Nucleoside-triphosphatase THEP1 from Aquifex aeolicus (strain VF5).